A 518-amino-acid polypeptide reads, in one-letter code: Phytoene desaturase (neurosporene-forming) (518 aa).

14-47 contacts FAD; that stretch reads LVIGSGLGGLAAAMRLGAKGWRVTVIDKLDVPGG.

It belongs to the carotenoid/retinoid oxidoreductase family. It depends on FAD as a cofactor.

The enzyme catalyses 15-cis-phytoene + 3 A = all-trans-neurosporene + 3 AH2. Its pathway is carotenoid biosynthesis. In terms of biological role, converts phytoene into all-trans-neurosporene as the major product, via the intermediary of phytofluene and zeta-carotene, by the introduction of three double bonds. The chain is Phytoene desaturase (neurosporene-forming) (crtI) from Cereibacter sphaeroides (strain ATCC 17023 / DSM 158 / JCM 6121 / CCUG 31486 / LMG 2827 / NBRC 12203 / NCIMB 8253 / ATH 2.4.1.) (Rhodobacter sphaeroides).